The chain runs to 766 residues: EMILIN-3 (766 aa).

The signal sequence occupies residues 1-22 (MGRRRLLVWLCAVAALLSGAQA). The 77-residue stretch at 55 to 131 (HKALCAYVVH…PGFTGKRCPE (77 aa)) folds into the EMI domain. 3 disulfide bridges follow: C59/C121, C86/C92, and C120/C129. N-linked (GlcNAc...) asparagine glycosylation is present at N66. The segment at 132 to 179 (HLTDHGAASPQLEPEPQIPSGQLDPGPRPPSYSRAAPSPHGRKGPGLF) is disordered. N443 carries an N-linked (GlcNAc...) asparagine glycan. Residues 467-491 (GTMLEERVQSLEERLATLAGELSHD) are a coiled coil. 3 N-linked (GlcNAc...) asparagine glycosylation sites follow: N562, N616, and N732. Coiled-coil stretches lie at residues 615–663 (ANTS…QLKA) and 726–761 (SHVD…EQVR).

The protein resides in the secreted. It is found in the extracellular space. The protein localises to the extracellular matrix. The chain is EMILIN-3 (EMILIN3) from Homo sapiens (Human).